A 374-amino-acid polypeptide reads, in one-letter code: Ribosomal RNA large subunit methyltransferase G (374 aa).

This sequence belongs to the methyltransferase superfamily. RlmG family.

It is found in the cytoplasm. The enzyme catalyses guanosine(1835) in 23S rRNA + S-adenosyl-L-methionine = N(2)-methylguanosine(1835) in 23S rRNA + S-adenosyl-L-homocysteine + H(+). Its function is as follows. Specifically methylates the guanine in position 1835 (m2G1835) of 23S rRNA. The chain is Ribosomal RNA large subunit methyltransferase G from Pseudomonas putida (strain W619).